Consider the following 142-residue polypeptide: Crustacean hyperglycemic hormones (142 aa).

Positions 1–26 are cleaved as a signal peptide; that stretch reads MYSKTIPAMLAIITVAYLCALPHAHA. Q67 is modified (pyrrolidone carboxylic acid; partial). 3 disulfides stabilise this stretch: C73–C109, C89–C105, and C92–C118. Residue V138 is modified to Valine amide.

The protein belongs to the arthropod CHH/MIH/GIH/VIH hormone family. In terms of processing, the N-terminus is blocked only in isoform CHH-II but not in isoform CHH-I. In terms of tissue distribution, produced by the medulla terminalis X-organ in the eyestalks and transported to the sinus gland where they are stored and released.

It is found in the secreted. Functionally, hormone found in the sinus gland of isopods and decapods which controls the blood sugar level. Has a secretagogue action over the amylase released from the midgut gland. May act as a stress hormone and may be involved in the control of molting and reproduction. The sequence is that of Crustacean hyperglycemic hormones from Carcinus maenas (Common shore crab).